A 556-amino-acid chain; its full sequence is Formate--tetrahydrofolate ligase 1 (556 aa).

65–72 (TPAGEGKT) is an ATP binding site.

This sequence belongs to the formate--tetrahydrofolate ligase family.

It catalyses the reaction (6S)-5,6,7,8-tetrahydrofolate + formate + ATP = (6R)-10-formyltetrahydrofolate + ADP + phosphate. Its pathway is one-carbon metabolism; tetrahydrofolate interconversion. In Desulfitobacterium hafniense (strain Y51), this protein is Formate--tetrahydrofolate ligase 1.